Consider the following 288-residue polypeptide: Eukaryotic translation initiation factor 3 subunit G (288 aa).

A disordered region spans residues 1–35 (MSRVANNRDWADDEDLEDSNELPQSTTTTNKDGTQ). Over residues 11–20 (ADDEDLEDSN) the composition is skewed to acidic residues. Positions 21-35 (ELPQSTTTTNKDGTQ) are enriched in polar residues. Residues 208-286 (ATLRVTNVSE…LILRVEFAKK (79 aa)) enclose the RRM domain.

This sequence belongs to the eIF-3 subunit G family. As to quaternary structure, component of the eukaryotic translation initiation factor 3 (eIF-3) complex.

It localises to the cytoplasm. Functionally, RNA-binding component of the eukaryotic translation initiation factor 3 (eIF-3) complex, which is involved in protein synthesis of a specialized repertoire of mRNAs and, together with other initiation factors, stimulates binding of mRNA and methionyl-tRNAi to the 40S ribosome. The eIF-3 complex specifically targets and initiates translation of a subset of mRNAs involved in cell proliferation. This subunit can bind 18S rRNA. This Botryotinia fuckeliana (strain B05.10) (Noble rot fungus) protein is Eukaryotic translation initiation factor 3 subunit G (tif35).